A 423-amino-acid chain; its full sequence is Histidine--tRNA ligase (423 aa).

This sequence belongs to the class-II aminoacyl-tRNA synthetase family. As to quaternary structure, homodimer.

The protein resides in the cytoplasm. The catalysed reaction is tRNA(His) + L-histidine + ATP = L-histidyl-tRNA(His) + AMP + diphosphate + H(+). The chain is Histidine--tRNA ligase from Bacillus cytotoxicus (strain DSM 22905 / CIP 110041 / 391-98 / NVH 391-98).